The chain runs to 689 residues: Methionine--tRNA ligase (689 aa).

A 'HIGH' region motif is present at residues 15–25 (PYANGPIHLGH). Zn(2+)-binding residues include Cys146, Cys149, Cys159, and Cys162. A 'KMSKS' region motif is present at residues 332 to 336 (KMSKS). Residue Lys335 participates in ATP binding. The interval 546–577 (KDNLQPTEAPKADKKADKKVEKKATTGDPLTD) is disordered. Basic and acidic residues predominate over residues 555–570 (PKADKKADKKVEKKAT). Residues 588-689 (DFAKLDLRIA…QGAKPGMRVK (102 aa)) form the tRNA-binding domain.

This sequence belongs to the class-I aminoacyl-tRNA synthetase family. MetG type 1 subfamily. Homodimer. Zn(2+) serves as cofactor.

It is found in the cytoplasm. The enzyme catalyses tRNA(Met) + L-methionine + ATP = L-methionyl-tRNA(Met) + AMP + diphosphate. Is required not only for elongation of protein synthesis but also for the initiation of all mRNA translation through initiator tRNA(fMet) aminoacylation. The sequence is that of Methionine--tRNA ligase from Shewanella denitrificans (strain OS217 / ATCC BAA-1090 / DSM 15013).